The following is a 284-amino-acid chain: Kynurenine formamidase avaC (284 aa).

The HGGXW motif lies at 47 to 51 (HGGGW). The active-site Nucleophile is S130.

This sequence belongs to the kynurenine formamidase family.

The enzyme catalyses N-formyl-L-kynurenine + H2O = L-kynurenine + formate + H(+). It functions in the pathway secondary metabolite metabolism. Its function is as follows. Kynurenine formamidase; part of the cluster that mediates the biosynthesis of a highly modified cyclo-arginine-tryptophan dipeptide (cRW). Within the pathway, avaC catalyzes the deformylation of the cyclo-Arg-formylkynurenine iketopiperazine (DKP), produced by the FAD-dependent monooxygenase avaB. The first step of the pathway is perfornmed by the arginine-containing cyclodipeptide synthase (RCPDS) avaA that acts as the scaffold-generating enzyme and is responsible for formation of the cyclo-Arg-Trp (cRW) diketopiperazine. AvaB then acts as a multifunctional flavoenzyme that is responsible for generating the cyclo-Arg-formylkynurenine DKP, which can be deformylated by avaC. AvaB then further catalyzes an additional N-oxidation followed by cyclization and dehydration. The next step is an N-acetylation of the guanidine group catalyzed by the arginine N-acetyltransferase avaD. The roles of the additional enzymes identified within the ava cluster still have to be determined. This chain is Kynurenine formamidase avaC, found in Aspergillus versicolor.